The primary structure comprises 825 residues: Putative pentatricopeptide repeat-containing protein At2g01510 (825 aa).

PPR repeat units follow at residues 47–77 (DTCRSNFIVEDLLRRGQVSAARKVYDEMPHK), 78–108 (NTVSTNTMISGHVKTGDVSSARDLFDAMPDR), 109–143 (TVVTWTILMGWYARNSHFDEAFKLFRQMCRSSSCT), 146–180 (DHVTFTTLLPGCNDAVPQNAVGQVHAFAVKLGFDT), 183–213 (FLTVSNVLLKSYCEVRRLDLACVLFEEIPEK), 214–248 (DSVTFNTLITGYEKDGLYTESIHLFLKMRQSGHQP), 249–283 (SDFTFSGVLKAVVGLHDFALGQQLHALSVTTGFSR), 284–314 (DASVGNQILDFYSKHDRVLETRMLFDEMPEL), 315–349 (DFVSYNVVISSYSQADQYEASLHFFREMQCMGFDR), 350–384 (RNFPFATMLSIAANLSSLQMGRQLHCQALLATADS), 385–415 (ILHVGNSLVDMYAKCEMFEEAELIFKSLPQR), 416–450 (TTVSWTALISGYVQKGLHGAGLKLFTKMRGSNLRA), 451–485 (DQSTFATVLKASASFASLLLGKQLHAFIIRSGNLE), 486–516 (NVFSGSGLVDMYAKCGSIKDAVQVFEEMPDR), 517–551 (NAVSWNALISAHADNGDGEAAIGAFAKMIESGLQP), 552–587 (DSVSILGVLTACSHCGFVEQGTEYFQAMSPIYGITP), and 588–618 (KKKHYACMLDLLGRNGRFAEAEKLMDEMPFE). The tract at residues 623–699 (MWSSVLNACR…VPAYSWVEVN (77 aa)) is type E motif. Residues 700–730 (HKIHVFSSNDQTHPNGDEIVRKINELTAEIE) are type E(+) motif. The tract at residues 731 to 825 (REGYKPDTSS…EGVCSCGDYW (95 aa)) is type DYW motif.

The protein belongs to the PPR family. PCMP-H subfamily.

The sequence is that of Putative pentatricopeptide repeat-containing protein At2g01510 (PCMP-H36) from Arabidopsis thaliana (Mouse-ear cress).